A 116-amino-acid chain; its full sequence is Large ribosomal subunit protein uL18 (116 aa).

This sequence belongs to the universal ribosomal protein uL18 family. As to quaternary structure, part of the 50S ribosomal subunit; part of the 5S rRNA/L5/L18/L25 subcomplex. Contacts the 5S and 23S rRNAs.

Its function is as follows. This is one of the proteins that bind and probably mediate the attachment of the 5S RNA into the large ribosomal subunit, where it forms part of the central protuberance. This is Large ribosomal subunit protein uL18 from Acholeplasma laidlawii (strain PG-8A).